The following is a 55-amino-acid chain: Mannose/glucose-specific lectin alpha chain (55 aa).

It belongs to the leguminous lectin family. In terms of assembly, tetramer of two alpha and two beta chains.

In Lathyrus sativus (White vetchling), this protein is Mannose/glucose-specific lectin alpha chain.